Here is a 352-residue protein sequence, read N- to C-terminus: Delta(7)-sterol 5(6)-desaturas erg3A (352 aa).

Asn39 carries N-linked (GlcNAc...) asparagine glycosylation. The next 3 membrane-spanning stretches (helical) occupy residues 82–102 (FLSF…ISAT), 128–147 (IAQT…PFLV), and 167–187 (YYSI…IYWI). The Fatty acid hydroxylase domain maps to 174-299 (PLFIAFTDFC…FTTLWDRLGG (126 aa)). Residues 188–192 (HRGLH) carry the Histidine box-1 motif. The Histidine box-2 motif lies at 201 to 205 (HKPHH). A helical membrane pass occupies residues 231–251 (HVFPFIFPLQKLAYVFLFGFI). A Histidine box-3 motif is present at residues 276 to 280 (HTMHH).

The protein belongs to the sterol desaturase family. Fe cation is required as a cofactor.

It is found in the endoplasmic reticulum membrane. Functionally, delta(7)-sterol 5(6)-desaturase; part of the third module of ergosterol biosynthesis pathway that includes the late steps of the pathway. Erg3A is a minor delta(7)-sterol 5(6)-desaturase within the ergosterol pathway, erg3B being the major one. The third module or late pathway involves the ergosterol synthesis itself through consecutive reactions that mainly occur in the endoplasmic reticulum (ER) membrane. Firstly, the squalene synthase erg9 catalyzes the condensation of 2 farnesyl pyrophosphate moieties to form squalene, which is the precursor of all steroids. Squalene synthase is crucial for balancing the incorporation of farnesyl diphosphate (FPP) into sterol and nonsterol isoprene synthesis. Secondly, squalene is converted into lanosterol by the consecutive action of the squalene epoxidase erg1 and the lanosterol synthase erg7. Then, the delta(24)-sterol C-methyltransferase erg6 methylates lanosterol at C-24 to produce eburicol. Eburicol is the substrate of the sterol 14-alpha demethylase encoded by cyp51A and cyp51B, to yield 4,4,24-trimethyl ergosta-8,14,24(28)-trienol. The C-14 reductase erg24 then reduces the C14=C15 double bond which leads to 4,4-dimethylfecosterol. A sequence of further demethylations at C-4, involving the C-4 demethylation complex containing the C-4 methylsterol oxidases erg25A or erg25B, the sterol-4-alpha-carboxylate 3-dehydrogenase erg26 and the 3-keto-steroid reductase erg27, leads to the production of fecosterol via 4-methylfecosterol. The C-8 sterol isomerase erg2 then catalyzes the reaction which results in unsaturation at C-7 in the B ring of sterols and thus converts fecosterol to episterol. The sterol-C5-desaturase erg3B then catalyzes the introduction of a C-5 double bond in the B ring to produce 5-dehydroepisterol. The 2 other sterol-C5-desaturases, erg3A and erg3C, seem to be less important in ergosterol biosynthesis. The C-22 sterol desaturase erg5 further converts 5-dehydroepisterol into ergosta-5,7,22,24(28)-tetraen-3beta-ol by forming the C-22(23) double bond in the sterol side chain. Finally, ergosta-5,7,22,24(28)-tetraen-3beta-ol is substrate of the C-24(28) sterol reductases erg4A and erg4B to produce ergosterol. Possible alternative sterol biosynthetic pathways might exist from fecosterol to ergosterol, depending on the activities of the erg3 isoforms. The sequence is that of Delta(7)-sterol 5(6)-desaturas erg3A from Aspergillus fumigatus (strain ATCC MYA-4609 / CBS 101355 / FGSC A1100 / Af293) (Neosartorya fumigata).